Consider the following 321-residue polypeptide: Phospho-N-acetylmuramoyl-pentapeptide-transferase (321 aa).

The next 10 membrane-spanning stretches (helical) occupy residues 1-21 (MIFVYALLALVITFVLVPVLI), 50-70 (MGGLTFLLSIVITSLVAIIFV), 76-96 (IILLLFVTIGFGLIGFIDDYI), 112-132 (FLAQIGIAIIFFVLSNVFHLV), 140-160 (IPFTNVAIPLSFAYVIFIVFL), 176-196 (GLATGLSIIGFTMYAIMSFVL), 200-220 (AIGIFCIIMLFALLGFLPYNI), 225-245 (VFMGDTGSLALGGIFATISIM), 250-270 (LSLIFIGLVFVIETLSVMLQV), and 300-320 (VVTVFWAVGLISGLIGLWIGV).

Belongs to the glycosyltransferase 4 family. MraY subfamily. Mg(2+) serves as cofactor.

It localises to the cell membrane. It carries out the reaction UDP-N-acetyl-alpha-D-muramoyl-L-alanyl-gamma-D-glutamyl-L-lysyl-D-alanyl-D-alanine + di-trans,octa-cis-undecaprenyl phosphate = Mur2Ac(oyl-L-Ala-gamma-D-Glu-L-Lys-D-Ala-D-Ala)-di-trans,octa-cis-undecaprenyl diphosphate + UMP. It participates in cell wall biogenesis; peptidoglycan biosynthesis. Functionally, catalyzes the initial step of the lipid cycle reactions in the biosynthesis of the cell wall peptidoglycan: transfers peptidoglycan precursor phospho-MurNAc-pentapeptide from UDP-MurNAc-pentapeptide onto the lipid carrier undecaprenyl phosphate, yielding undecaprenyl-pyrophosphoryl-MurNAc-pentapeptide, known as lipid I. This chain is Phospho-N-acetylmuramoyl-pentapeptide-transferase, found in Staphylococcus aureus (strain bovine RF122 / ET3-1).